The sequence spans 193 residues: dCTP deaminase (193 aa).

Residues 110-115, Asp-128, 136-138, Tyr-171, Lys-178, and Gln-182 each bind dCTP; these read RSSLAR and VLE. Glu-138 acts as the Proton donor/acceptor in catalysis.

This sequence belongs to the dCTP deaminase family. As to quaternary structure, homotrimer.

It carries out the reaction dCTP + H2O + H(+) = dUTP + NH4(+). It participates in pyrimidine metabolism; dUMP biosynthesis; dUMP from dCTP (dUTP route): step 1/2. Catalyzes the deamination of dCTP to dUTP. In Aeromonas hydrophila subsp. hydrophila (strain ATCC 7966 / DSM 30187 / BCRC 13018 / CCUG 14551 / JCM 1027 / KCTC 2358 / NCIMB 9240 / NCTC 8049), this protein is dCTP deaminase.